Consider the following 76-residue polypeptide: Acyl carrier protein (76 aa).

One can recognise a Carrier domain in the interval 1-75 (MVLEKIKTLM…DVVLYIEKNL (75 aa)). An O-(pantetheine 4'-phosphoryl)serine modification is found at Ser35.

Belongs to the acyl carrier protein (ACP) family. In terms of processing, 4'-phosphopantetheine is transferred from CoA to a specific serine of apo-ACP by AcpS. This modification is essential for activity because fatty acids are bound in thioester linkage to the sulfhydryl of the prosthetic group.

The protein resides in the cytoplasm. It functions in the pathway lipid metabolism; fatty acid biosynthesis. Carrier of the growing fatty acid chain in fatty acid biosynthesis. The protein is Acyl carrier protein of Phytoplasma australiense.